We begin with the raw amino-acid sequence, 675 residues long: DNA ligase (675 aa).

Residues 35 to 39, 84 to 85, and E118 each bind NAD(+); these read DAVYD and SL. K120 serves as the catalytic N6-AMP-lysine intermediate. 4 residues coordinate NAD(+): R141, E178, K295, and K319. 4 residues coordinate Zn(2+): C413, C416, C431, and C436. The BRCT domain occupies 598-675; that stretch reads GAIGALTGQT…DEAELKALLS (78 aa).

The protein belongs to the NAD-dependent DNA ligase family. LigA subfamily. The cofactor is Mg(2+). Requires Mn(2+) as cofactor.

It carries out the reaction NAD(+) + (deoxyribonucleotide)n-3'-hydroxyl + 5'-phospho-(deoxyribonucleotide)m = (deoxyribonucleotide)n+m + AMP + beta-nicotinamide D-nucleotide.. Functionally, DNA ligase that catalyzes the formation of phosphodiester linkages between 5'-phosphoryl and 3'-hydroxyl groups in double-stranded DNA using NAD as a coenzyme and as the energy source for the reaction. It is essential for DNA replication and repair of damaged DNA. This Synechococcus sp. (strain RCC307) protein is DNA ligase.